The following is a 457-amino-acid chain: MDHLPIFCQLRDRDCLIVGGGDVAERKARLLLDAGARLTVNALAFIPQFTAWADAGMLTLVEGPFDESLLDTCWLAIAATDDDTLNQRVSEAAEARRIFCNVVDAPKAASFIMPSIIDRSPLMVAVSSGGTSPVLARLLREKLESLLPLHLGQVAKYAGQLRGRVKQQFATMSERRRFWEKLFVNDRLAQSLANNDQKAITETTEQLINEPLDHRGEVVLVGAGPGDAGLLTLKGLQQIQQADVVVYDRLVSDDIMNLVRRDADRVFVGKRAGYHCVPQEEINQILLREAQKGKRVVRLKGGDPFIFGRGGEELETLCNAGIPFSVVPGITAASGCSAYSGIPLTHRDYAQSVRLITGHLKTGGELDWENLAAEKQTLVFYMGLNQAATIQQKLIEHGMPGEMPVAIVENGTAVTQRVIDGTLTQLGELAQQMNSPSLIIIGRVVGLRDKLNWFSNH.

Residues 1-204 (MDHLPIFCQL…NDQKAITETT (204 aa)) are precorrin-2 dehydrogenase /sirohydrochlorin ferrochelatase. NAD(+) contacts are provided by residues 22–23 (DV) and 43–44 (LA). Position 128 is a phosphoserine (S128). Positions 216–457 (GEVVLVGAGP…RDKLNWFSNH (242 aa)) are uroporphyrinogen-III C-methyltransferase. P225 contributes to the S-adenosyl-L-methionine binding site. D248 acts as the Proton acceptor in catalysis. The active-site Proton donor is K270. S-adenosyl-L-methionine contacts are provided by residues 301-303 (GGD), I306, 331-332 (TA), M382, and G411.

It in the N-terminal section; belongs to the precorrin-2 dehydrogenase / sirohydrochlorin ferrochelatase family. This sequence in the C-terminal section; belongs to the precorrin methyltransferase family.

It catalyses the reaction uroporphyrinogen III + 2 S-adenosyl-L-methionine = precorrin-2 + 2 S-adenosyl-L-homocysteine + H(+). The catalysed reaction is precorrin-2 + NAD(+) = sirohydrochlorin + NADH + 2 H(+). It carries out the reaction siroheme + 2 H(+) = sirohydrochlorin + Fe(2+). It functions in the pathway cofactor biosynthesis; adenosylcobalamin biosynthesis; precorrin-2 from uroporphyrinogen III: step 1/1. Its pathway is cofactor biosynthesis; adenosylcobalamin biosynthesis; sirohydrochlorin from precorrin-2: step 1/1. It participates in porphyrin-containing compound metabolism; siroheme biosynthesis; precorrin-2 from uroporphyrinogen III: step 1/1. The protein operates within porphyrin-containing compound metabolism; siroheme biosynthesis; siroheme from sirohydrochlorin: step 1/1. It functions in the pathway porphyrin-containing compound metabolism; siroheme biosynthesis; sirohydrochlorin from precorrin-2: step 1/1. Functionally, multifunctional enzyme that catalyzes the SAM-dependent methylations of uroporphyrinogen III at position C-2 and C-7 to form precorrin-2 via precorrin-1. Then it catalyzes the NAD-dependent ring dehydrogenation of precorrin-2 to yield sirohydrochlorin. Finally, it catalyzes the ferrochelation of sirohydrochlorin to yield siroheme. This is Siroheme synthase from Shigella flexneri.